We begin with the raw amino-acid sequence, 804 residues long: Exo-1,4-beta-xylosidase xlnD (804 aa).

The N-terminal stretch at 1–26 (MAHSMSRPVAATAAALLALALPQALA) is a signal peptide. N-linked (GlcNAc...) asparagine glycosylation is found at Asn29, Asn124, Asn148, Asn242, and Asn251. Asp315 is an active-site residue. 9 N-linked (GlcNAc...) asparagine glycosylation sites follow: Asn357, Asn390, Asn413, Asn444, Asn455, Asn573, Asn665, Asn696, and Asn718.

The protein belongs to the glycosyl hydrolase 3 family.

Its subcellular location is the secreted. It carries out the reaction Hydrolysis of (1-&gt;4)-beta-D-xylans, to remove successive D-xylose residues from the non-reducing termini.. It participates in glycan degradation; xylan degradation. Xylan 1,4-beta-xylosidase involved in the hydrolysis of xylan, a major structural heterogeneous polysaccharide found in plant biomass representing the second most abundant polysaccharide in the biosphere, after cellulose. The chain is Exo-1,4-beta-xylosidase xlnD (xlnD) from Aspergillus awamori (Black koji mold).